Consider the following 262-residue polypeptide: Ribosomal RNA small subunit methyltransferase A (262 aa).

S-adenosyl-L-methionine contacts are provided by His16, Leu18, Gly43, Glu64, Asp89, and Asn109.

The protein belongs to the class I-like SAM-binding methyltransferase superfamily. rRNA adenine N(6)-methyltransferase family. RsmA subfamily.

It is found in the cytoplasm. It carries out the reaction adenosine(1518)/adenosine(1519) in 16S rRNA + 4 S-adenosyl-L-methionine = N(6)-dimethyladenosine(1518)/N(6)-dimethyladenosine(1519) in 16S rRNA + 4 S-adenosyl-L-homocysteine + 4 H(+). In terms of biological role, specifically dimethylates two adjacent adenosines (A1518 and A1519) in the loop of a conserved hairpin near the 3'-end of 16S rRNA in the 30S particle. May play a critical role in biogenesis of 30S subunits. This is Ribosomal RNA small subunit methyltransferase A from Xanthomonas axonopodis pv. citri (strain 306).